We begin with the raw amino-acid sequence, 440 residues long: Chromosome partition protein MukF (440 aa).

The tract at residues 208-236 (LSETSGTLRELQDTLEAAGDKLQANLLRI) is leucine-zipper.

The protein belongs to the MukF family. Interacts, and probably forms a ternary complex, with MukE and MukB via its C-terminal region. The complex formation is stimulated by calcium or magnesium. It is required for an interaction between MukE and MukB.

The protein resides in the cytoplasm. Its subcellular location is the nucleoid. Involved in chromosome condensation, segregation and cell cycle progression. May participate in facilitating chromosome segregation by condensation DNA from both sides of a centrally located replisome during cell division. Not required for mini-F plasmid partitioning. Probably acts via its interaction with MukB and MukE. Overexpression results in anucleate cells. It has a calcium binding activity. The chain is Chromosome partition protein MukF from Escherichia coli O17:K52:H18 (strain UMN026 / ExPEC).